The chain runs to 182 residues: Adenine phosphoribosyltransferase (182 aa).

The protein belongs to the purine/pyrimidine phosphoribosyltransferase family. Homodimer.

The protein localises to the cytoplasm. The catalysed reaction is AMP + diphosphate = 5-phospho-alpha-D-ribose 1-diphosphate + adenine. The protein operates within purine metabolism; AMP biosynthesis via salvage pathway; AMP from adenine: step 1/1. Catalyzes a salvage reaction resulting in the formation of AMP, that is energically less costly than de novo synthesis. This Saccharopolyspora erythraea (strain ATCC 11635 / DSM 40517 / JCM 4748 / NBRC 13426 / NCIMB 8594 / NRRL 2338) protein is Adenine phosphoribosyltransferase.